A 581-amino-acid polypeptide reads, in one-letter code: Interleukin-22 receptor subunit alpha-1 (581 aa).

The signal sequence occupies residues 1–15 (MKTLLTILTVGSLAA). Residues 16–230 (HTTVDTSGLL…TLPDRTWAYS (215 aa)) are Extracellular-facing. Fibronectin type-III domains are found at residues 18–115 (TVDT…RFSS) and 141–221 (PTLT…RVKT). Cysteines 71 and 79 form a disulfide. Asn80 and Asn172 each carry an N-linked (GlcNAc...) asparagine glycan. Cys128 and Cys217 are disulfide-bonded. Residues 231 to 251 (FSGAVLFSMGFLVGLLCYLGY) form a helical membrane-spanning segment. At 252-581 (KYITKPPVPP…GLALTVQWES (330 aa)) the chain is on the cytoplasmic side. Residues 343–364 (QQTLSPPSYAPKAVPEVQPPSY) form a disordered region. Phosphoserine; by GSK3-beta occurs at positions 410 and 414. Lys449 participates in a covalent cross-link: Glycyl lysine isopeptide (Lys-Gly) (interchain with G-Cter in ubiquitin).

It belongs to the type II cytokine receptor family. Heterodimer with IL10RB and with IL20RB. In terms of processing, phosphorylated by GSK3-BETA and MAPK; phosphorylation by GSK3-BETA stabilizes IL22RA1 by preventing its proteasomal degradation. As to expression, expressed in kidney, liver and lung.

The protein localises to the cell membrane. Functionally, component of the receptor for IL20, IL22 and IL24. Component of IL22 receptor formed by IL22RA1 and IL10RB enabling IL22 signaling via JAK/STAT pathways. IL22 also induces activation of MAPK1/MAPK3 and Akt kinases pathways. Component of one of the receptor for IL20 and IL24 formed by IL22RA1 and IL20RB also signaling through STATs activation. Mediates IL24 antiangiogenic activity as well as IL24 inhibitory effect on endothelial cell tube formation and differentiation. In Mus musculus (Mouse), this protein is Interleukin-22 receptor subunit alpha-1 (Il22ra1).